Here is a 206-residue protein sequence, read N- to C-terminus: Large ribosomal subunit protein uL4 (206 aa).

A disordered region spans residues 43-78 (NQRQGTHDTKTRAEVRGGGRKPWRQKGTGRARAGSS). A compositionally biased stretch (basic and acidic residues) spans 47 to 59 (GTHDTKTRAEVRG). A compositionally biased stretch (basic residues) spans 60–71 (GGRKPWRQKGTG).

Belongs to the universal ribosomal protein uL4 family. In terms of assembly, part of the 50S ribosomal subunit.

One of the primary rRNA binding proteins, this protein initially binds near the 5'-end of the 23S rRNA. It is important during the early stages of 50S assembly. It makes multiple contacts with different domains of the 23S rRNA in the assembled 50S subunit and ribosome. Functionally, forms part of the polypeptide exit tunnel. This is Large ribosomal subunit protein uL4 from Desulforamulus reducens (strain ATCC BAA-1160 / DSM 100696 / MI-1) (Desulfotomaculum reducens).